The primary structure comprises 459 residues: Bifunctional protein GlmU (459 aa).

Residues 1–229 are pyrophosphorylase; the sequence is MSNFAIILAA…FDESLGVNDR (229 aa). UDP-N-acetyl-alpha-D-glucosamine contacts are provided by residues 8–11, lysine 22, glutamine 72, and 77–78; these read LAAG and GT. Mg(2+) is bound at residue aspartate 102. Positions 139, 154, 169, and 227 each coordinate UDP-N-acetyl-alpha-D-glucosamine. Asparagine 227 provides a ligand contact to Mg(2+). Positions 230 to 250 are linker; sequence VALATAESVMRRRINHKHMVN. An N-acetyltransferase region spans residues 251 to 459; it reads GVSFVNPEAT…TRLPHHPKNQ (209 aa). Residues arginine 332 and lysine 350 each contribute to the UDP-N-acetyl-alpha-D-glucosamine site. Residue histidine 362 is the Proton acceptor of the active site. Residues tyrosine 365 and asparagine 376 each coordinate UDP-N-acetyl-alpha-D-glucosamine. Acetyl-CoA contacts are provided by residues alanine 379, 385-386, serine 404, alanine 422, and arginine 439; that span reads NY.

The protein in the N-terminal section; belongs to the N-acetylglucosamine-1-phosphate uridyltransferase family. It in the C-terminal section; belongs to the transferase hexapeptide repeat family. As to quaternary structure, homotrimer. Requires Mg(2+) as cofactor.

It is found in the cytoplasm. It carries out the reaction alpha-D-glucosamine 1-phosphate + acetyl-CoA = N-acetyl-alpha-D-glucosamine 1-phosphate + CoA + H(+). The enzyme catalyses N-acetyl-alpha-D-glucosamine 1-phosphate + UTP + H(+) = UDP-N-acetyl-alpha-D-glucosamine + diphosphate. It participates in nucleotide-sugar biosynthesis; UDP-N-acetyl-alpha-D-glucosamine biosynthesis; N-acetyl-alpha-D-glucosamine 1-phosphate from alpha-D-glucosamine 6-phosphate (route II): step 2/2. Its pathway is nucleotide-sugar biosynthesis; UDP-N-acetyl-alpha-D-glucosamine biosynthesis; UDP-N-acetyl-alpha-D-glucosamine from N-acetyl-alpha-D-glucosamine 1-phosphate: step 1/1. It functions in the pathway bacterial outer membrane biogenesis; LPS lipid A biosynthesis. Catalyzes the last two sequential reactions in the de novo biosynthetic pathway for UDP-N-acetylglucosamine (UDP-GlcNAc). The C-terminal domain catalyzes the transfer of acetyl group from acetyl coenzyme A to glucosamine-1-phosphate (GlcN-1-P) to produce N-acetylglucosamine-1-phosphate (GlcNAc-1-P), which is converted into UDP-GlcNAc by the transfer of uridine 5-monophosphate (from uridine 5-triphosphate), a reaction catalyzed by the N-terminal domain. The polypeptide is Bifunctional protein GlmU (Streptococcus pneumoniae serotype 2 (strain D39 / NCTC 7466)).